Consider the following 155-residue polypeptide: uncharacterized protein (155 aa).

Positions 1–24 (MQQLSKRRLSALFVTAFLPVTAFA) are cleaved as a signal peptide.

This is an uncharacterized protein from Chromohalobacter salexigens (strain ATCC BAA-138 / DSM 3043 / CIP 106854 / NCIMB 13768 / 1H11).